The chain runs to 329 residues: Flotillin-like protein FloA (329 aa).

2 helical membrane passes run 6–26 (FIVI…FVPI) and 27–47 (GLWI…LVGM).

The protein belongs to the flotillin-like FloA family. In terms of assembly, homooligomerizes.

The protein resides in the cell membrane. The protein localises to the membrane raft. Its function is as follows. Found in functional membrane microdomains (FMM) that may be equivalent to eukaryotic membrane rafts. FMMs are highly dynamic and increase in number as cells age. Flotillins are thought to be important factors in membrane fluidity. This Staphylococcus aureus (strain USA300) protein is Flotillin-like protein FloA.